A 508-amino-acid chain; its full sequence is Matrix metalloproteinase-19 (508 aa).

Residues 1 to 18 (MNCQQLWLGFLLPMTVSG) form the signal peptide. A propeptide spanning residues 19–97 (RVLGLAEVAP…EDPFNQKTLK (79 aa)) is cleaved from the precursor. The Cysteine switch signature appears at 83-90 (PRCGLEDP). Residues C85 and H212 each contribute to the Zn(2+) site. E213 is an active-site residue. Zn(2+) is bound by residues H216 and H222. Residues 262–288 (IRDEEEEETELPTVPPVPTEPSPMPDP) form a disordered region. Residues 274–287 (TVPPVPTEPSPMPD) are compositionally biased toward pro residues. Hemopexin repeat units follow at residues 286–333 (PDPC…WEGL), 334–380 (PGNL…EPNL), 381–425 (DAAL…FTGV), and 426–472 (PNQP…WMHC). A disulfide bridge links C289 with C472. N464 carries an N-linked (GlcNAc...) asparagine glycan.

The protein belongs to the peptidase M10A family. Zn(2+) is required as a cofactor. It depends on Ca(2+) as a cofactor. Activated by autolytic cleavage after Lys-97. Post-translationally, tyrosine phosphorylated by PKDCC/VLK. As to expression, expressed in mammary gland, placenta, lung, pancreas, ovary, small intestine, spleen, thymus, prostate, testis colon, heart and blood vessel walls. Not detected in brain and peripheral blood leukocytes. Also expressed in the synovial fluid of normal and rheumatoid patients.

The protein resides in the secreted. It localises to the extracellular space. The protein localises to the extracellular matrix. With respect to regulation, strongly inhibited by TIMP-2, TIMP-3 and TIMP-4, while TIMP-1 is less efficient. Endopeptidase that degrades various components of the extracellular matrix, such as aggrecan and cartilage oligomeric matrix protein (comp), during development, haemostasis and pathological conditions (arthritic disease). May also play a role in neovascularization or angiogenesis. Hydrolyzes collagen type IV, laminin, nidogen, nascin-C isoform, fibronectin, and type I gelatin. This Homo sapiens (Human) protein is Matrix metalloproteinase-19 (MMP19).